The sequence spans 181 residues: UPF0398 protein LMOf2365_1918 (181 aa).

It belongs to the UPF0398 family.

In Listeria monocytogenes serotype 4b (strain F2365), this protein is UPF0398 protein LMOf2365_1918.